Reading from the N-terminus, the 293-residue chain is Protease HtpX homolog (293 aa).

2 helical membrane passes run 4 to 24 (IFLF…VLSL) and 39 to 59 (PMLL…SLLI). Residue H144 coordinates Zn(2+). The active site involves E145. Residue H148 coordinates Zn(2+). 2 helical membrane-spanning segments follow: residues 159-179 (LVQG…GYFV) and 200-220 (ITVL…VAWF). Residue E225 coordinates Zn(2+).

It belongs to the peptidase M48B family. Zn(2+) is required as a cofactor.

It localises to the cell inner membrane. The polypeptide is Protease HtpX homolog (Herminiimonas arsenicoxydans).